Consider the following 540-residue polypeptide: DNA-(apurinic or apyrimidinic site) endonuclease (540 aa).

Asparagine 206 and glutamate 239 together coordinate Mg(2+). A disordered region spans residues asparagine 256 to lysine 276. A compositionally biased stretch (basic and acidic residues) spans lysine 263–lysine 276. Mg(2+) contacts are provided by aspartate 400, asparagine 402, aspartate 530, and histidine 531. Residue histidine 531 is the Proton acceptor of the active site.

The protein belongs to the DNA repair enzymes AP/ExoA family. It depends on Mg(2+) as a cofactor. Mn(2+) serves as cofactor. In terms of processing, may be proteolytically cleaved.

It localises to the mitochondrion. The enzyme catalyses Exonucleolytic cleavage in the 3'- to 5'-direction to yield nucleoside 5'-phosphates.. In terms of biological role, multifunctional protein that plays a central role in mitochondrial DNA base excision repair pathway induced by oxidative stress. Has apurinic/apyrimidinic (AP) endonuclease activity towards double-stranded DNA (dsDNA). Has nucleotide incision repair (NIR) activity; acts on dsDNA with oxidized bases thymine glycol and 5,6-dihydro-2'-deoxyuridine. Has 3'-5' exonuclease; can use dsDNA templates with 3'-OH termini including blunt-end, gapped and mismatched 3'-recessed. Has 3'-phosphatase activity; cleaves 3'-phosphate from blunt, recessed and gapped dsDNA templates, followed by 3'-5' exonuclease activity. Has RNase H-like activity; cleaves RNA on 3'-recessed RNA-DNA duplex. Plays a role in merosome infection of host erythrocytes. The chain is DNA-(apurinic or apyrimidinic site) endonuclease from Plasmodium berghei (strain Anka).